Reading from the N-terminus, the 447-residue chain is Na(+)/H(+) antiporter NhaA 2 (447 aa).

Helical transmembrane passes span 34 to 54, 77 to 97, 115 to 135, 146 to 166, 176 to 196, 200 to 220, 290 to 310, 321 to 341, 359 to 379, and 393 to 413; these read VGGV…NSPW, LTLG…VVGL, ALPI…FVLV, GWAI…AVIG, FLLT…AVFY, INGL…LCVQ, VSAG…SIGG, PITL…IVLT, WVDV…SLLI, and FVKI…AVVL.

The protein belongs to the NhaA Na(+)/H(+) (TC 2.A.33) antiporter family.

It is found in the cell membrane. The catalysed reaction is Na(+)(in) + 2 H(+)(out) = Na(+)(out) + 2 H(+)(in). Functionally, na(+)/H(+) antiporter that extrudes sodium in exchange for external protons. The sequence is that of Na(+)/H(+) antiporter NhaA 2 from Mycolicibacterium gilvum (strain PYR-GCK) (Mycobacterium gilvum (strain PYR-GCK)).